The primary structure comprises 214 residues: Variable small protein 24 (214 aa).

The first 18 residues, 1–18 (MRKRISAIIMTLFMVFMS), serve as a signal peptide directing secretion. Cys19 is lipidated: N-palmitoyl cysteine. A lipid anchor (S-diacylglycerol cysteine) is attached at Cys19. Residues 146-172 (TELGKKDASDDDTKKAIKKDNSDKTKG) form a disordered region.

The protein belongs to the variable small protein (Vsp) family.

The protein localises to the cell outer membrane. In terms of biological role, the Vlp and Vsp proteins are antigenically distinct proteins, only one vlp or vsp gene is transcriptionally active at any one time. Switching between these genes is a mechanism of host immune response evasion. The polypeptide is Variable small protein 24 (Borrelia hermsii).